Reading from the N-terminus, the 363-residue chain is DNA replication and repair protein RecF (363 aa).

30-37 serves as a coordination point for ATP; the sequence is GNNAQGKT.

The protein belongs to the RecF family.

The protein resides in the cytoplasm. In terms of biological role, the RecF protein is involved in DNA metabolism; it is required for DNA replication and normal SOS inducibility. RecF binds preferentially to single-stranded, linear DNA. It also seems to bind ATP. The polypeptide is DNA replication and repair protein RecF (Clostridium acetobutylicum (strain ATCC 824 / DSM 792 / JCM 1419 / IAM 19013 / LMG 5710 / NBRC 13948 / NRRL B-527 / VKM B-1787 / 2291 / W)).